The following is a 126-amino-acid chain: Desulfoferrodoxin (126 aa).

Fe cation is bound by residues Cys-10, Cys-13, Cys-29, Cys-30, His-49, His-69, His-75, Cys-116, and His-119.

This sequence belongs to the desulfoferrodoxin family. In terms of assembly, homodimer. Fe(3+) is required as a cofactor. It depends on Cu(2+) as a cofactor.

The catalysed reaction is reduced [rubredoxin] + superoxide + 2 H(+) = oxidized [rubredoxin] + H2O2. Catalyzes the one-electron reduction of superoxide anion radical to hydrogen peroxide at a nonheme ferrous iron center. Plays a fundamental role in case of oxidative stress via its superoxide detoxification activity. This is Desulfoferrodoxin (dfx) from Syntrophotalea carbinolica (strain DSM 2380 / NBRC 103641 / GraBd1) (Pelobacter carbinolicus).